Reading from the N-terminus, the 91-residue chain is Elongation factor 1-beta (91 aa).

This sequence belongs to the EF-1-beta/EF-1-delta family.

Functionally, promotes the exchange of GDP for GTP in EF-1-alpha/GDP, thus allowing the regeneration of EF-1-alpha/GTP that could then be used to form the ternary complex EF-1-alpha/GTP/AAtRNA. This chain is Elongation factor 1-beta, found in Thermococcus gammatolerans (strain DSM 15229 / JCM 11827 / EJ3).